Here is a 335-residue protein sequence, read N- to C-terminus: MAITRASFAICILLSLATIATADYYAPSSPPVYTSPVNKPTLPPPVYTPPVHKPTLPPPVYTPPVHKPTLSPPVYTKPTLPPPAYTPPVYNKPTLPAPVYTPPVYKPTLSPPVYTKPTLLPPVFKPTLSPPVYTKPTLSPTVYKPTLSPPVNNKPSLSPPVYKPTLSPPVYTKPTLPPPVYKKSPSYSPPPPFAPKPTYTPPTKPYVPEIIKAVGGIILCKNGYETYPIQGAKAKIVCSERGSYEKSKNEVVIYSDPTDFKGYFHVVLTHIKNLSNCRVKLYTSPVETCKNPTNVNKGLTGVPFSMYSDKNLKLFNVGPFYFTAGSKAAPATPRY.

The first 22 residues, 1–22, serve as a signal peptide directing secretion; sequence MAITRASFAICILLSLATIATA. A run of 39 repeats spans residues 30 to 34, 35 to 39, 40 to 43, 44 to 48, 49 to 53, 54 to 57, 58 to 62, 63 to 67, 68 to 71, 72 to 76, 77 to 81, 82 to 86, 87 to 91, 92 to 96, 97 to 101, 102 to 106, 107 to 110, 111 to 115, 116 to 120, 121 to 125, 126 to 130, 131 to 135, 136 to 139, 140 to 144, 145 to 148, 149 to 153, 154 to 158, 159 to 163, 164 to 167, 168 to 172, 173 to 177, 178 to 182, 184 to 189, 190 to 194, 195 to 200, 201 to 207, 208 to 212, 284 to 288, and 319 to 323. Residues 30-323 form a 39 X 5 AA approximate repeats region; it reads PPVYTSPVNK…LFNVGPFYFT (294 aa).

It belongs to the plant proline-rich protein superfamily. ENOD12 family. In terms of tissue distribution, exclusively expressed in roots, especially in root hairs.

It is found in the secreted. It localises to the cell wall. In terms of biological role, may contribute to cell wall structure in root hairs. The sequence is that of Proline-rich protein 1 (PRP1) from Arabidopsis thaliana (Mouse-ear cress).